Consider the following 488-residue polypeptide: Catalase (488 aa).

A disordered region spans residues 1–24; sequence MTERKNLTTNQGTPVGDNQNSMTA. Over residues 7-23 the composition is skewed to polar residues; sequence LTTNQGTPVGDNQNSMT. Residues His55 and Asn128 contribute to the active site. Residue Tyr338 coordinates heme.

The protein belongs to the catalase family. Heme serves as cofactor.

The protein resides in the cytoplasm. It catalyses the reaction 2 H2O2 = O2 + 2 H2O. Its function is as follows. Decomposes hydrogen peroxide into water and oxygen; serves to protect cells from the toxic effects of hydrogen peroxide. This is Catalase (kat) from Listeria innocua serovar 6a (strain ATCC BAA-680 / CLIP 11262).